Reading from the N-terminus, the 227-residue chain is UPF0173 metal-dependent hydrolase Bsph_4138 (227 aa).

It belongs to the UPF0173 family.

The protein is UPF0173 metal-dependent hydrolase Bsph_4138 of Lysinibacillus sphaericus (strain C3-41).